A 179-amino-acid chain; its full sequence is Large ribosomal subunit protein uL5 (179 aa).

The protein belongs to the universal ribosomal protein uL5 family. In terms of assembly, part of the 50S ribosomal subunit; part of the 5S rRNA/L5/L18/L25 subcomplex. Contacts the 5S rRNA and the P site tRNA. Forms a bridge to the 30S subunit in the 70S ribosome.

Its function is as follows. This is one of the proteins that bind and probably mediate the attachment of the 5S RNA into the large ribosomal subunit, where it forms part of the central protuberance. In the 70S ribosome it contacts protein S13 of the 30S subunit (bridge B1b), connecting the 2 subunits; this bridge is implicated in subunit movement. Contacts the P site tRNA; the 5S rRNA and some of its associated proteins might help stabilize positioning of ribosome-bound tRNAs. The chain is Large ribosomal subunit protein uL5 from Exiguobacterium sp. (strain ATCC BAA-1283 / AT1b).